We begin with the raw amino-acid sequence, 344 residues long: N-acetyl-gamma-glutamyl-phosphate reductase (344 aa).

The active site involves Cys149.

The protein belongs to the NAGSA dehydrogenase family. Type 1 subfamily.

Its subcellular location is the cytoplasm. The catalysed reaction is N-acetyl-L-glutamate 5-semialdehyde + phosphate + NADP(+) = N-acetyl-L-glutamyl 5-phosphate + NADPH + H(+). Its pathway is amino-acid biosynthesis; L-arginine biosynthesis; N(2)-acetyl-L-ornithine from L-glutamate: step 3/4. Its function is as follows. Catalyzes the NADPH-dependent reduction of N-acetyl-5-glutamyl phosphate to yield N-acetyl-L-glutamate 5-semialdehyde. The sequence is that of N-acetyl-gamma-glutamyl-phosphate reductase from Halorhodospira halophila (strain DSM 244 / SL1) (Ectothiorhodospira halophila (strain DSM 244 / SL1)).